The primary structure comprises 292 residues: NAD kinase (292 aa).

Catalysis depends on Asp64, which acts as the Proton acceptor. NAD(+) is bound by residues 64–65 (DG), 138–139 (ND), Arg149, Arg166, Asp168, 179–184 (TGYAVS), and Gln238.

Belongs to the NAD kinase family. Requires a divalent metal cation as cofactor.

The protein localises to the cytoplasm. It carries out the reaction NAD(+) + ATP = ADP + NADP(+) + H(+). Its function is as follows. Involved in the regulation of the intracellular balance of NAD and NADP, and is a key enzyme in the biosynthesis of NADP. Catalyzes specifically the phosphorylation on 2'-hydroxyl of the adenosine moiety of NAD to yield NADP. The sequence is that of NAD kinase from Oleidesulfovibrio alaskensis (strain ATCC BAA-1058 / DSM 17464 / G20) (Desulfovibrio alaskensis).